We begin with the raw amino-acid sequence, 826 residues long: Lon protease (826 aa).

The segment covering 1–20 has biased composition (basic and acidic residues); sequence MSEEELNNRDTESKQEHDEN. The tract at residues 1–27 is disordered; that stretch reads MSEEELNNRDTESKQEHDENNSNFEAG. The Lon N-terminal domain maps to 33–231; the sequence is LPVLPLREVI…KVHALLEKEL (199 aa). 384–391 serves as a coordination point for ATP; it reads GPPGVGKT. One can recognise a Lon proteolytic domain in the interval 620 to 801; the sequence is ENLVGMTTGL…SEALTFTLAE (182 aa). Active-site residues include Ser707 and Lys750.

It belongs to the peptidase S16 family. Homohexamer. Organized in a ring with a central cavity.

Its subcellular location is the cytoplasm. It catalyses the reaction Hydrolysis of proteins in presence of ATP.. Functionally, ATP-dependent serine protease that mediates the selective degradation of mutant and abnormal proteins as well as certain short-lived regulatory proteins. Required for cellular homeostasis and for survival from DNA damage and developmental changes induced by stress. Degrades polypeptides processively to yield small peptide fragments that are 5 to 10 amino acids long. Binds to DNA in a double-stranded, site-specific manner. The sequence is that of Lon protease from Neorickettsia sennetsu (strain ATCC VR-367 / Miyayama) (Ehrlichia sennetsu).